The following is a 345-amino-acid chain: MSRYQDAGVDVNAGYELVHRIKDAVKSTDRPGVIGGIGSFGGMFDLEKLQVQHPILVSGTDGVGTKLLIAQQMNKHDTIGIDVVAMCVNDVLAQGAEPITFLDYIATGHNDPAKMAAIVSGVATGCREAGAALIGGETAEMPDMYAANEYDLAGTVTGIAEKEELLTTAGPQKGDILLGLPSSGLHSNGFSLVRQILFKDNHVKLTDRPEALRGKTVGETILTPTRIYVQAVLPLVHRKLVHGISHITGGGLIENVPRMLGDNLQAVIDPGRWPQLPVFDYLRVLGGLTKEDCFEAFNMGIGMVLAVAPDQVAQVQEILSNKNMTSYQIGYLRHCLPDTKKIVIK.

The protein belongs to the AIR synthase family.

Its subcellular location is the cytoplasm. It catalyses the reaction 2-formamido-N(1)-(5-O-phospho-beta-D-ribosyl)acetamidine + ATP = 5-amino-1-(5-phospho-beta-D-ribosyl)imidazole + ADP + phosphate + H(+). Its pathway is purine metabolism; IMP biosynthesis via de novo pathway; 5-amino-1-(5-phospho-D-ribosyl)imidazole from N(2)-formyl-N(1)-(5-phospho-D-ribosyl)glycinamide: step 2/2. This is Phosphoribosylformylglycinamidine cyclo-ligase from Limosilactobacillus reuteri (strain DSM 20016) (Lactobacillus reuteri).